Here is an 876-residue protein sequence, read N- to C-terminus: Radial spoke head 10 homolog B (876 aa).

Basic and acidic residues predominate over residues 1–16 (MVKEKKKADKKGDKSA). Positions 1-71 (MVKEKKKADK…VQMEQSEEET (71 aa)) are disordered. The span at 17–37 (RSPSSISDNPEASKQDSNASK) shows a compositional bias: polar residues. A compositionally biased stretch (low complexity) spans 39-50 (EVAPSAVVPVVE). 10 MORN repeats span residues 86–108 (YEGE…GGNT), 109–129 (YHGM…WADG), 132–154 (YEGD…DGST), 155–172 (YEGE…MFKC), 179–196 (YIGH…SIYY), 204–225 (YEGD…KSGN), 227–244 (YEGQ…RMRW), 251–268 (YTGH…THTW), 284–305 (YIGE…ASGA), and 307–328 (YEGE…KNGH). Positions 356–372 (WSDASQRSRQPRGSSVS) are enriched in polar residues. Residues 356–386 (WSDASQRSRQPRGSSVSAVREPETLRKLDGS) form a disordered region. Residues 375–386 (REPETLRKLDGS) show a composition bias toward basic and acidic residues. The stretch at 790–832 (LKEKVKENQLQEAELAQQRQIENEELEARLNILREEEARKQDF) forms a coiled coil. A disordered region spans residues 839–876 (LKEPSEIPASQPLTPSPPKEDLASIQTSKASPGKKKKK).

In terms of assembly, interacts with RSPH6A. Does not appear to be part of the axonemal radial spoke complexes 1 or 2. Expressed in ependymal cells (at protein level).

It localises to the cytoplasm. It is found in the cytoskeleton. The protein resides in the cilium axoneme. The protein localises to the cell projection. Its subcellular location is the cilium. It localises to the flagellum. In terms of biological role, may function as part of the axonemal radial spoke complex 3 (RS3). Radial spoke complexes are important for ciliary motility. This is Radial spoke head 10 homolog B from Mus musculus (Mouse).